The sequence spans 251 residues: Insulin-induced gene 1 protein (251 aa).

Residues Met-1–Leu-58 are Cytoplasmic-facing. The chain crosses the membrane as a helical span at residues Ile-59–Ile-81. At Gln-82–Ala-100 the chain is on the extracellular side. A helical membrane pass occupies residues Trp-101–Tyr-118. Residues Pro-119–Arg-133 lie on the Cytoplasmic side of the membrane. The helical transmembrane segment at Glu-134–Asp-156 threads the bilayer. Residues Phe-157–Asn-159 are Extracellular-facing. Residues Asn-160–Phe-178 traverse the membrane as a helical segment. Residues Asp-179–Ser-183 lie on the Cytoplasmic side of the membrane. A helical membrane pass occupies residues Gly-184–Asn-205. Over Gly-206–Arg-219 the chain is Extracellular. The chain crosses the membrane as a helical span at residues Ser-220–Gly-237. At Arg-238–Asp-251 the chain is on the cytoplasmic side. The KxHxx signature appears at Thr-245–Asp-251.

It belongs to the INSIG family. As to quaternary structure, interacts with scap; interaction is direct and only takes place in the presence of sterols; it prevents interaction between scap and the coat protein complex II (COPII). Associates with the SCAP-SREBP complex; association is mediated via its interaction with scap and only takes place in the presence of sterols.

It is found in the endoplasmic reticulum membrane. Functionally, oxysterol-binding protein that mediates feedback control of cholesterol synthesis by controlling both endoplasmic reticulum to Golgi transport of scap and degradation of hmgcr. Acts as a negative regulator of cholesterol biosynthesis by mediating the retention of the SCAP-SREBP complex in the endoplasmic reticulum, thereby blocking the processing of sterol regulatory element-binding proteins (SREBPs). Binds oxysterol, including 25-hydroxycholesterol, regulating interaction with scap and retention of the SCAP-SREBP complex in the endoplasmic reticulum. In presence of oxysterol, interacts with scap, retaining the SCAP-SREBP complex in the endoplasmic reticulum, thereby preventing scap from escorting SREBPs to the Golgi. Sterol deprivation reduces oxysterol-binding, disrupting the interaction between insig1 and scap, thereby promoting Golgi transport of the SCAP-SREBP complex, followed by processing and nuclear translocation of SREBPs. Also regulates cholesterol synthesis by regulating degradation of hmgcr. The chain is Insulin-induced gene 1 protein from Danio rerio (Zebrafish).